We begin with the raw amino-acid sequence, 1146 residues long: MLELPFTTIRPNCRLRQNLGILIILQCVLTCYNFNLEQRLPIVKYGHPHSHFGYSVATHTIGEANGPNKTNCVLVGAPLDQNRQPNTTHSGALWRCPMTQRFDDCEQVITDGRRNFDSEILSPPGNDEIKEDQWMGVTVRSNPLQANGSGGKVIVCAHRYMYIVRENRYGQGLCYLLTNDLQFEEVHEPCKGRPVQRQHEDYGLCQAGTSAALLDDDTMVLGSPGPYTWRGSIWVTQVGGEYLQRDKTTYYSDHSDLNSPVDKYSYLGMSVTGGRFFGHMSYAAGAPRSEGHGQVVIFDKSTDNPIPVHSILDGEQFGSSFGYELATADINGDHRPDLIVAAPLYFTKTEGGAVYVYQNIQDTLPMKYTLKLTGPLESRFGLALANIGDLNKDNCEDLAVGAPYEGNGVVYIYLGSSQGLNSKPAQKIQASELGGTIPNGQPIRTFGISISGNTDLDDNSYPDVVIGAFNSSAAVILLARPIISIQTSVQRKELHNMDPNTPGCLDDPASNLTCFTFRACCSIEPYDEKNKELRLAYSVEAETFDHLKKFSRVFFFDRENKRTNVLSRVVRVHTNGRTECQAVTGYIKANTRDIQTPVRFRLKYSLVEPPLADSALVRLNPILDQTQAHVDFEGTFQKDCGDDDLCESNLIIRVEPNITESSGNEYTLILDETELEVRINVSNLADSAYEAQLFIAHQAGVSYVATKKPTNATCNSYNTTLVACSLGNPMLRDTTTFVTIRFQPKGLEPSEKIMLFHIFANTTSKLVGPERPERDLRVNVVRRAKLNFRGWAIPEQSFYSGSSVANSVANTAATDIEGHGPMGMDDVGSQVHHMFTIFNEGPSTAPKVQMVIHWPYSLYSDPQSGRPVQYLLYLEQVPTVEVSQGECHVAKEYVNPLNLASGSRENPAYLSAPAQMRMFPSQSRHSFNKSLIHSQRSYYSSSHRDDHSDDTQSNRNRVRRSFLERVTRLERLMYDPESSNAANGKKQDIVELDCNKGATNCVRIECDILNMPALSEAQVVVKARLWNSTLVSEYPRVERVRIFSTATAQIPESYGVEVMDHNNIEVETRAYPELRNQQRDTSIPWLIIILGIVGGLLLLALVTYVLWKVGFFKRIRPTDPTLSGNLEKMNEEKPFLAPSKNTHHVF.

Positions 1–30 (MLELPFTTIRPNCRLRQNLGILIILQCVLT) are cleaved as a signal peptide. Residues 31-1085 (CYNFNLEQRL…NQQRDTSIPW (1055 aa)) are Extracellular-facing. 7 FG-GAP repeats span residues 38–105 (QRLP…FDDC), 121–186 (LSPP…FEEV), 193–245 (RPVQ…YLQR), 254–303 (HSDL…KSTD), 304–366 (NPIP…TLPM), 367–422 (KYTL…GLNS), and 432–494 (ELGG…RKEL). N-linked (GlcNAc...) asparagine glycosylation is found at Asn-68, Asn-86, and Asn-147. N-linked (GlcNAc...) asparagine glycans are attached at residues Asn-470, Asn-511, Asn-657, Asn-680, Asn-711, Asn-718, Asn-761, and Asn-928. The interval 938-958 (YYSSSHRDDHSDDTQSNRNRV) is disordered. Positions 942–952 (SHRDDHSDDTQ) are enriched in basic and acidic residues. Asn-1027 is a glycosylation site (N-linked (GlcNAc...) asparagine). A helical transmembrane segment spans residues 1086–1106 (LIIILGIVGGLLLLALVTYVL). Over 1107-1146 (WKVGFFKRIRPTDPTLSGNLEKMNEEKPFLAPSKNTHHVF) the chain is Cytoplasmic.

It belongs to the integrin alpha chain family. Heterodimer of an alpha and a beta subunit. The alpha subunit is composed of a heavy and a light chain linked by a disulfide bond. Alpha-PS1 associates with beta-PS. As to expression, expressed in follicle cells (at protein level). At syncytial blastoderm stage, expressed in the ectoderm but not in the mesodermal precursors. At embryonic stage 7, expressed in dorsal and ventrolateral ectoderm and in some yolk nuclei. At late stage 10, expression is homogeneous in the ectoderm and is particularly abundant in the anterior and posterior midgut primordia. At stage 11, strongly expressed in a metameric pattern in the ectoderm, in the proctodeum and in the posterior midgut primordium. At stage 12, accumulates at the segment boundaries that start to become morphologically visible, similar expression pattern is observed in the central nervous system. In third larval instar wing imaginal disk, strongly expressed in the dorsal compartment, in the adepithelial cells and in patches on the peripodial membrane covering the imaginal disk to the outside.

Its subcellular location is the apical cell membrane. The protein resides in the lateral cell membrane. It is found in the basal cell membrane. Its function is as follows. Integrin alpha-PS1/beta-PS is a receptor for laminin. In Drosophila melanogaster (Fruit fly), this protein is Integrin alpha-PS1 (mew).